The chain runs to 164 residues: Polygalacturonase (164 aa).

Belongs to the glycosyl hydrolase 28 family.

The protein localises to the secreted. It localises to the cell wall. The enzyme catalyses (1,4-alpha-D-galacturonosyl)n+m + H2O = (1,4-alpha-D-galacturonosyl)n + (1,4-alpha-D-galacturonosyl)m.. The protein is Polygalacturonase of Cupressus sempervirens (Italian cypress).